We begin with the raw amino-acid sequence, 249 residues long: Flagellar L-ring protein (249 aa).

The N-terminal stretch at 1–25 (MSRLRTSHALRTAAALVAVGCLASG) is a signal peptide. C26 carries N-palmitoyl cysteine lipidation. A lipid anchor (S-diacylglycerol cysteine) is attached at C26.

This sequence belongs to the FlgH family. In terms of assembly, the basal body constitutes a major portion of the flagellar organelle and consists of four rings (L,P,S, and M) mounted on a central rod.

The protein localises to the cell outer membrane. It is found in the bacterial flagellum basal body. Functionally, assembles around the rod to form the L-ring and probably protects the motor/basal body from shearing forces during rotation. The sequence is that of Flagellar L-ring protein from Afipia carboxidovorans (strain ATCC 49405 / DSM 1227 / KCTC 32145 / OM5) (Oligotropha carboxidovorans).